Here is a 217-residue protein sequence, read N- to C-terminus: uncharacterized protein (217 aa).

This is an uncharacterized protein from Acidianus sp. F28 (AFV-2).